A 797-amino-acid polypeptide reads, in one-letter code: Short transient receptor potential channel 4-associated protein (797 aa).

The residue at position 2 (A2) is an N-acetylalanine. The interval 2 to 400 (AAAPAAAGAG…VLYVLCVLLM (399 aa)) is interaction with TNFRSF1A.

In terms of assembly, component of the DCX(TRPC4AP) E3 ubiquitin ligase complex, at least composed of CUL4A, DDB1, TRPC4AP/TRUSS and RBX1. Interacts with MYC. Constitutively associated with TNFRSF1A. Directly interacts with TRADD, TRAF2, CHUK, IKBKB and IKBKG. Interacts with TRPC1, TRPC4 and TRPC5. Phosphorylated by GSK3B; phosphorylation is required for ubiquitination. Post-translationally, ubiquitinated by a SCF (SKP1-CUL1-F-box protein) E3 ubiquitin-protein ligase containing SKP2, leading to its degradation. Phosphorylation by GSK3B is required for ubiquitination. In terms of tissue distribution, widely expressed, with high levels in heart, liver and testis.

It localises to the cytoplasm. Its subcellular location is the perinuclear region. It functions in the pathway protein modification; protein ubiquitination. Substrate-recognition component of a DCX (DDB1-CUL4-X-box) E3 ubiquitin-protein ligase complex required for cell cycle control. The DCX(TRPC4AP) complex specifically mediates the polyubiquitination and subsequent degradation of MYC as part of the DesCEND (destruction via C-end degrons) pathway. The DesCEND (destruction via C-end degrons) pathway recognizes a C-degron located at the extreme C terminus of target proteins, leading to their ubiquitination and degradation. The DCX(TRPC4AP) complex specifically recognizes proteins with an arginine at the minus 3 position (R-3 motif) at the C-terminus, such as MYC, leading to their ubiquitination and degradation. Also participates in the activation of NFKB1 in response to ligation of TNFRSF1A, possibly by linking TNFRSF1A to the IKK signalosome. Involved in JNK activation via its interaction with TRAF2. Also involved in elevation of endoplasmic reticulum Ca(2+) storage reduction in response to CHRM1. This chain is Short transient receptor potential channel 4-associated protein, found in Mus musculus (Mouse).